Consider the following 1331-residue polypeptide: Disease resistance protein RUN1 (1331 aa).

The segment at 1-20 (MASTSSSRASSSSSSSSTPS) is disordered. One can recognise a TIR domain in the interval 25–190 (ITYDVFLSFR…EITDSIFRRL (166 aa)). NAD(+) is bound by residues 34–39 (RGEDTR) and Gly-66. Glu-100 is an active-site residue. The NB-ARC domain maps to 206-434 (SHVKEMIWRL…REPEAEILSV (229 aa)). LRR repeat units follow at residues 429 to 452 (AEIL…IFLD), 480 to 509 (IKNL…GWEI), 540 to 565 (IKRV…AFAK), 616 to 638 (SYEL…NFDG), 648 to 673 (CSNI…SYSR), 684 to 708 (MPNL…VGNM), 709 to 732 (KKLT…IGDL), 734 to 756 (SLEI…GGNM), 757 to 779 (KSLT…IGDL), 781 to 803 (SLKY…GGNM), 804 to 826 (KSLR…IRDL), 828 to 850 (SLER…GGNM), 851 to 873 (KSLM…IGDL), 875 to 897 (SLKY…GGNM), 898 to 920 (KSLT…IGDL), 922 to 944 (SLVS…GGNM), 945 to 967 (KSLN…IGDL), 969 to 991 (SLMR…VGNM), 992 to 1014 (KSLE…IGDL), and 1017 to 1040 (LEKL…AIDA). The Nuclear localization signal motif lies at 1287–1291 (RKRRR).

This sequence belongs to the disease resistance TIR-NB-LRR family.

It localises to the nucleus. The protein resides in the cytoplasm. The catalysed reaction is NAD(+) + H2O = ADP-D-ribose + nicotinamide + H(+). It catalyses the reaction NADP(+) + H2O = ADP-D-ribose 2'-phosphate + nicotinamide + H(+). Disease resistance (R) protein that confers resistance to multiple powdery and downy mildew by promoting cell death. Acts as a NAD(+) hydrolase (NADase): in response to activation, catalyzes cleavage of NAD(+) into ADP-D-ribose (ADPR) and nicotinamide; NAD(+) cleavage triggering a defense system that promotes cell death. Also able to hydrolyze NADP(+), but not other NAD(+)-related molecules. The polypeptide is Disease resistance protein RUN1 (Vitis rotundifolia (Muscadine grape)).